A 629-amino-acid chain; its full sequence is LEAF RUST 10 DISEASE-RESISTANCE LOCUS RECEPTOR-LIKE PROTEIN KINASE-like 1.1 (629 aa).

A signal peptide spans 1–19 (METVSVLLFFFLFLLAAEA). Over 20–225 (RSTKRTGCKD…PNNYHAEMRL (206 aa)) the chain is Extracellular. Residues Asn56, Asn92, Asn123, Asn124, Asn172, and Asn177 are each glycosylated (N-linked (GlcNAc...) asparagine). The chain crosses the membrane as a helical span at residues 226-246 (GLGIGGSVILIIILVALFAVI). Residues 247–629 (HRNYRRKDGS…TTPNTSAYEF (383 aa)) lie on the Cytoplasmic side of the membrane. The 275-residue stretch at 291–565 (FSKDRLLGDG…TMEQVVHELK (275 aa)) folds into the Protein kinase domain. Residues 297 to 305 (LGDGGFGTV) and Lys319 each bind ATP. Tyr365 is modified (phosphotyrosine). Asp416 acts as the Proton acceptor in catalysis. Ser449 carries the post-translational modification Phosphoserine. Phosphothreonine is present on residues Thr450 and Thr455. Tyr463 is modified (phosphotyrosine). Positions 609 to 629 (VSVTDQWTSKSTTPNTSAYEF) are disordered.

This sequence belongs to the protein kinase superfamily. Ser/Thr protein kinase family.

The protein localises to the cell membrane. It catalyses the reaction L-seryl-[protein] + ATP = O-phospho-L-seryl-[protein] + ADP + H(+). It carries out the reaction L-threonyl-[protein] + ATP = O-phospho-L-threonyl-[protein] + ADP + H(+). This Arabidopsis thaliana (Mouse-ear cress) protein is LEAF RUST 10 DISEASE-RESISTANCE LOCUS RECEPTOR-LIKE PROTEIN KINASE-like 1.1.